Reading from the N-terminus, the 218-residue chain is MTENIVRETSKKKESPPENTWLELGKTMVTAVILAIGIRTFVAEARYIPSSSMEPTLQINDRLIIEKISYRLRDPERGEIVVFNPTDALKAKNFHDAFIKRIIGLPGDEVRVSQGNVYVNGKMLDENYIAAPPAYEYGPVKVPDDQYLVLGDNRNNSYDSHYWGFVPREKLLGRAFVRFWPVPRVGLLTDDAEREAVEISPQAWESPAISPQTVPESR.

Residues 1 to 26 (MTENIVRETSKKKESPPENTWLELGK) lie on the Cytoplasmic side of the membrane. The chain crosses the membrane as a helical span at residues 27–43 (TMVTAVILAIGIRTFVA). At 44–218 (EARYIPSSSM…ISPQTVPESR (175 aa)) the chain is on the periplasmic side. Catalysis depends on residues Ser52 and Lys100.

The protein belongs to the peptidase S26 family.

It localises to the cell membrane. It carries out the reaction Cleavage of hydrophobic, N-terminal signal or leader sequences from secreted and periplasmic proteins.. The polypeptide is Probable signal peptidase I-2 (lepB2) (Synechocystis sp. (strain ATCC 27184 / PCC 6803 / Kazusa)).